Here is a 359-residue protein sequence, read N- to C-terminus: S-adenosylmethionine-dependent nucleotide dehydratase RSAD2 (359 aa).

Residues 43 to 67 (QTPARKISRPESRTSKQKEGSRAPF) are disordered. The segment covering 50–63 (SRPESRTSKQKEGS) has biased composition (basic and acidic residues). Positions 67 to 287 (FTTPSSVNYH…LERHQSIQCL (221 aa)) constitute a Radical SAM core domain. Residues Cys81, Cys85, and Cys88 each contribute to the [4Fe-4S] cluster site.

The protein belongs to the radical SAM superfamily. RSAD2 family. [4Fe-4S] cluster serves as cofactor.

The protein resides in the endoplasmic reticulum membrane. Functionally, interferon-inducible iron-sulfur (4FE-4S) cluster-binding antiviral protein which plays a major role in the cell antiviral state induced by type I and type II interferon. In Danio rerio (Zebrafish), this protein is S-adenosylmethionine-dependent nucleotide dehydratase RSAD2.